A 199-amino-acid chain; its full sequence is Photosystem II D1 precursor processing protein PSB27-H2, chloroplastic (199 aa).

Belongs to the Psb27 family. Interacts with the C-terminus of both the precursor and mature form of D1.

The protein resides in the plastid. Its subcellular location is the chloroplast thylakoid lumen. Required, but not essential, for D1 (psbA) precursor processing and thus correct photosystem II assembly (PSII). In Arabidopsis thaliana (Mouse-ear cress), this protein is Photosystem II D1 precursor processing protein PSB27-H2, chloroplastic (PSB27-2).